A 587-amino-acid chain; its full sequence is Putative adenylate cyclase 3 (587 aa).

The 116-residue stretch at 12 to 127 folds into the Guanylate cyclase domain; that stretch reads AILAADAVGY…DGVNVAARIE (116 aa). TPR repeat units follow at residues 343-376, 421-454, 455-488, 490-522, and 524-556; these read LLVR…DPGM, PQGH…DPNS, ANAY…DPQF, LSLH…APRS, and MTRF…NPSF.

It belongs to the adenylyl cyclase class-3 family.

The enzyme catalyses ATP = 3',5'-cyclic AMP + diphosphate. The protein is Putative adenylate cyclase 3 (cya3) of Rhizobium meliloti (strain 1021) (Ensifer meliloti).